The sequence spans 62 residues: Photosystem II reaction center protein Z (62 aa).

Transmembrane regions (helical) follow at residues 8–28 (LVFILVIFSTLLVVGIPVTFA) and 41–61 (YTGAGIWTGLVLITGLVNSFI).

Belongs to the PsbZ family. PSII is composed of 1 copy each of membrane proteins PsbA, PsbB, PsbC, PsbD, PsbE, PsbF, PsbH, PsbI, PsbJ, PsbK, PsbL, PsbM, PsbT, sbX, PsbY, PsbZ, Psb30/Ycf12, at least 3 peripheral proteins of the oxygen-evolving complex and a large number of cofactors. It forms dimeric complexes.

Its subcellular location is the plastid. It is found in the chloroplast thylakoid membrane. May control the interaction of photosystem II (PSII) cores with the light-harvesting antenna, regulates electron flow through the 2 photosystem reaction centers. PSII is a light-driven water plastoquinone oxidoreductase, using light energy to abstract electrons from H(2)O, generating a proton gradient subsequently used for ATP formation. The polypeptide is Photosystem II reaction center protein Z (Gracilaria tenuistipitata var. liui (Red alga)).